A 374-amino-acid chain; its full sequence is bZIP transcription factor TRAB1 (374 aa).

Over residues 1 to 13 (MDLKDGGGSERRG) the composition is skewed to basic and acidic residues. 2 disordered regions span residues 1-23 (MDLKDGGGSERRGAAAGAGAGAA) and 117-142 (ASPGAAAADGGGGGGEQQQPRRQPTL). A compositionally biased stretch (low complexity) spans 14–23 (AAAGAGAGAA). The bZIP domain occupies 286-349 (VERRQRRMIK…KNFFPEMQKN (64 aa)). Positions 288 to 307 (RRQRRMIKNRESAARSRARK) are basic motif. The leucine-zipper stretch occupies residues 314–335 (LEAEVQKLKEQNMELQKKQEEI).

The protein belongs to the bZIP family. As to quaternary structure, interacts with VP1 (via N-terminus). As to expression, expressed in roots, leaves and embryos.

Its subcellular location is the nucleus. Transcription activator that mediates abscisic acid (ABA) signaling. Binds specifically to the ABA-responsive element (ABRE) of the EMP1 and RAB16A gene promoters. This chain is bZIP transcription factor TRAB1, found in Oryza sativa subsp. japonica (Rice).